A 185-amino-acid polypeptide reads, in one-letter code: Large ribosomal subunit protein uL22 (185 aa).

Belongs to the universal ribosomal protein uL22 family. Part of the 50S ribosomal subunit.

This protein binds specifically to 23S rRNA. It makes multiple contacts with different domains of the 23S rRNA in the assembled 50S subunit and ribosome. Its function is as follows. The globular domain of the protein is located near the polypeptide exit tunnel on the outside of the subunit, while an extended beta-hairpin is found that lines the wall of the exit tunnel in the center of the 70S ribosome. This chain is Large ribosomal subunit protein uL22, found in Pyrobaculum islandicum (strain DSM 4184 / JCM 9189 / GEO3).